A 599-amino-acid chain; its full sequence is Putative clathrin assembly protein At1g03050 (599 aa).

The ENTH domain maps to 26 to 162; the sequence is GRSASLSELD…DFRMQARHGK (137 aa). 2 disordered regions span residues 332 to 382 and 580 to 599; these read KQSK…PEEE and QGHMNLRQNQNQPYSYTPQY. Acidic residues-rich tracts occupy residues 341–359 and 373–382; these read ADEDDDEARTEEVNEEQED and EEDDVKPEEE. A compositionally biased stretch (polar residues) spans 585 to 599; that stretch reads LRQNQNQPYSYTPQY.

Its subcellular location is the membrane. It localises to the clathrin-coated pit. The protein resides in the golgi apparatus. It is found in the cytoplasmic vesicle. The protein localises to the clathrin-coated vesicle. The protein is Putative clathrin assembly protein At1g03050 of Arabidopsis thaliana (Mouse-ear cress).